The sequence spans 338 residues: Putative acyl-[acyl-carrier-protein] desaturase DesA1 (338 aa).

The Fe cation site is built by Glu-76, Glu-107, His-110, Glu-167, Glu-197, and His-200. Basic and acidic residues predominate over residues 314–328 (EARTGKKVSAHELHK). The disordered stretch occupies residues 314 to 338 (EARTGKKVSAHELHKTAGKLAMSRR).

The protein belongs to the fatty acid desaturase type 2 family. In terms of assembly, homodimer. Fe(2+) serves as cofactor.

It is found in the cell surface. It participates in lipid metabolism; fatty acid metabolism. Its function is as follows. May be a desaturase involved in mycobacterial fatty acid biosynthesis. The polypeptide is Putative acyl-[acyl-carrier-protein] desaturase DesA1 (desA1) (Mycobacterium tuberculosis (strain CDC 1551 / Oshkosh)).